Reading from the N-terminus, the 160-residue chain is Dysbindin domain-containing protein 1 (160 aa).

Residues Ser-3, Ser-97, and Ser-121 each carry the phosphoserine modification. Positions 95–160 (ADSDDENLAT…FLTVEEPKED (66 aa)) are disordered. Positions 127 to 143 (TRAEQNREKQPPSDPER) are enriched in basic and acidic residues.

This sequence belongs to the dysbindin family.

This Mus musculus (Mouse) protein is Dysbindin domain-containing protein 1 (Dbndd1).